Consider the following 473-residue polypeptide: Photosystem II CP43 reaction center protein (473 aa).

A propeptide spanning residues 1–14 (MKTLYSLRRFYPVE) is cleaved from the precursor. An N-acetylthreonine modification is found at Thr-15. Thr-15 carries the post-translational modification Phosphothreonine. Helical transmembrane passes span 69-93 (LFEV…PHLA), 134-155 (LLGP…KDRN), 178-200 (KALS…RKIT), 255-275 (KPFA…LSYS), and 291-312 (WFNN…ASQA). Glu-367 is a binding site for [CaMn4O5] cluster. Residues 447 to 471 (RARAAAAGFEKGIDRDFEPVLSMTP) traverse the membrane as a helical segment.

It belongs to the PsbB/PsbC family. PsbC subfamily. As to quaternary structure, PSII is composed of 1 copy each of membrane proteins PsbA, PsbB, PsbC, PsbD, PsbE, PsbF, PsbH, PsbI, PsbJ, PsbK, PsbL, PsbM, PsbT, PsbX, PsbY, PsbZ, Psb30/Ycf12, at least 3 peripheral proteins of the oxygen-evolving complex and a large number of cofactors. It forms dimeric complexes. It depends on Binds multiple chlorophylls and provides some of the ligands for the Ca-4Mn-5O cluster of the oxygen-evolving complex. It may also provide a ligand for a Cl- that is required for oxygen evolution. PSII binds additional chlorophylls, carotenoids and specific lipids. as a cofactor.

The protein localises to the plastid. Its subcellular location is the chloroplast thylakoid membrane. In terms of biological role, one of the components of the core complex of photosystem II (PSII). It binds chlorophyll and helps catalyze the primary light-induced photochemical processes of PSII. PSII is a light-driven water:plastoquinone oxidoreductase, using light energy to abstract electrons from H(2)O, generating O(2) and a proton gradient subsequently used for ATP formation. The sequence is that of Photosystem II CP43 reaction center protein from Pelargonium hortorum (Common geranium).